A 314-amino-acid polypeptide reads, in one-letter code: Methionyl-tRNA formyltransferase (314 aa).

110–113 is a (6S)-5,6,7,8-tetrahydrofolate binding site; that stretch reads SLLP.

Belongs to the Fmt family.

The catalysed reaction is L-methionyl-tRNA(fMet) + (6R)-10-formyltetrahydrofolate = N-formyl-L-methionyl-tRNA(fMet) + (6S)-5,6,7,8-tetrahydrofolate + H(+). Its function is as follows. Attaches a formyl group to the free amino group of methionyl-tRNA(fMet). The formyl group appears to play a dual role in the initiator identity of N-formylmethionyl-tRNA by promoting its recognition by IF2 and preventing the misappropriation of this tRNA by the elongation apparatus. This chain is Methionyl-tRNA formyltransferase, found in Lactobacillus gasseri (strain ATCC 33323 / DSM 20243 / BCRC 14619 / CIP 102991 / JCM 1131 / KCTC 3163 / NCIMB 11718 / NCTC 13722 / AM63).